Reading from the N-terminus, the 359-residue chain is Holliday junction branch migration complex subunit RuvB (359 aa).

The segment at 1 to 22 (MAIVSSNAEPSKGAPRPKPSRV) is disordered. Residues 13-204 (GAPRPKPSRV…FGLIQRLEFY (192 aa)) are large ATPase domain (RuvB-L). Residues Leu43, Arg44, Gly85, Lys88, Thr89, Thr90, Arg194, Tyr204, and Arg241 each contribute to the ATP site. A Mg(2+)-binding site is contributed by Thr89. Residues 205–276 (GQEDLQAIVM…LVDEALTLHR (72 aa)) are small ATPAse domain (RuvB-S). Positions 279 to 359 (GKGLDASDRR…GWPADEGDAA (81 aa)) are head domain (RuvB-H). The DNA site is built by Arg334 and Arg339.

This sequence belongs to the RuvB family. Homohexamer. Forms an RuvA(8)-RuvB(12)-Holliday junction (HJ) complex. HJ DNA is sandwiched between 2 RuvA tetramers; dsDNA enters through RuvA and exits via RuvB. An RuvB hexamer assembles on each DNA strand where it exits the tetramer. Each RuvB hexamer is contacted by two RuvA subunits (via domain III) on 2 adjacent RuvB subunits; this complex drives branch migration. In the full resolvosome a probable DNA-RuvA(4)-RuvB(12)-RuvC(2) complex forms which resolves the HJ.

Its subcellular location is the cytoplasm. It carries out the reaction ATP + H2O = ADP + phosphate + H(+). In terms of biological role, the RuvA-RuvB-RuvC complex processes Holliday junction (HJ) DNA during genetic recombination and DNA repair, while the RuvA-RuvB complex plays an important role in the rescue of blocked DNA replication forks via replication fork reversal (RFR). RuvA specifically binds to HJ cruciform DNA, conferring on it an open structure. The RuvB hexamer acts as an ATP-dependent pump, pulling dsDNA into and through the RuvAB complex. RuvB forms 2 homohexamers on either side of HJ DNA bound by 1 or 2 RuvA tetramers; 4 subunits per hexamer contact DNA at a time. Coordinated motions by a converter formed by DNA-disengaged RuvB subunits stimulates ATP hydrolysis and nucleotide exchange. Immobilization of the converter enables RuvB to convert the ATP-contained energy into a lever motion, pulling 2 nucleotides of DNA out of the RuvA tetramer per ATP hydrolyzed, thus driving DNA branch migration. The RuvB motors rotate together with the DNA substrate, which together with the progressing nucleotide cycle form the mechanistic basis for DNA recombination by continuous HJ branch migration. Branch migration allows RuvC to scan DNA until it finds its consensus sequence, where it cleaves and resolves cruciform DNA. In Synechococcus sp. (strain CC9311), this protein is Holliday junction branch migration complex subunit RuvB.